Consider the following 91-residue polypeptide: Large ribosomal subunit protein uL29 (91 aa).

A disordered region spans residues 67-91 (AAPLAESSAPAKTKSRARKSKKEAL). Residues 79–91 (TKSRARKSKKEAL) are compositionally biased toward basic residues.

Belongs to the universal ribosomal protein uL29 family.

This is Large ribosomal subunit protein uL29 from Acidobacterium capsulatum (strain ATCC 51196 / DSM 11244 / BCRC 80197 / JCM 7670 / NBRC 15755 / NCIMB 13165 / 161).